The following is a 171-amino-acid chain: Protein-export protein SecB (171 aa).

It belongs to the SecB family. Homotetramer, a dimer of dimers. One homotetramer interacts with 1 SecA dimer.

It is found in the cytoplasm. One of the proteins required for the normal export of preproteins out of the cell cytoplasm. It is a molecular chaperone that binds to a subset of precursor proteins, maintaining them in a translocation-competent state. It also specifically binds to its receptor SecA. This is Protein-export protein SecB from Histophilus somni (strain 129Pt) (Haemophilus somnus).